The primary structure comprises 123 residues: Small ribosomal subunit protein uS12 (123 aa).

Positions 1-32 (MPTIQQLVRKGRKTKVSKNKTPALKGSPQRRG) are disordered. The segment covering 9-18 (RKGRKTKVSK) has biased composition (basic residues). Position 89 is a 3-methylthioaspartic acid (D89).

This sequence belongs to the universal ribosomal protein uS12 family. As to quaternary structure, part of the 30S ribosomal subunit. Contacts proteins S8 and S17. May interact with IF1 in the 30S initiation complex.

Its function is as follows. With S4 and S5 plays an important role in translational accuracy. Functionally, interacts with and stabilizes bases of the 16S rRNA that are involved in tRNA selection in the A site and with the mRNA backbone. Located at the interface of the 30S and 50S subunits, it traverses the body of the 30S subunit contacting proteins on the other side and probably holding the rRNA structure together. The combined cluster of proteins S8, S12 and S17 appears to hold together the shoulder and platform of the 30S subunit. The sequence is that of Small ribosomal subunit protein uS12 from Thermobifida fusca (strain YX).